The following is a 491-amino-acid chain: Galactose-1-phosphate uridylyltransferase (491 aa).

The protein belongs to the galactose-1-phosphate uridylyltransferase type 2 family.

Its subcellular location is the cytoplasm. The catalysed reaction is alpha-D-galactose 1-phosphate + UDP-alpha-D-glucose = alpha-D-glucose 1-phosphate + UDP-alpha-D-galactose. It participates in carbohydrate metabolism; galactose metabolism. The protein is Galactose-1-phosphate uridylyltransferase (galT) of Streptococcus mutans serotype c (strain ATCC 700610 / UA159).